The chain runs to 513 residues: Sphingosine-1-phosphate transporter SPNS2 (513 aa).

11 helical membrane passes run 102–122 (GLLQ…FGYL), 130–150 (VILS…SFIP), 163–183 (LVGI…GDLF), 190–210 (LMLS…YITG), 222–242 (WALR…LIFV), 276–296 (LATS…PLYL), 320–340 (LIFG…GAGA), 354–374 (LVCA…FVAA), 378–398 (IIAA…NWAI), 422–442 (TSHL…SDLI), and 463–483 (LCPF…LFFL).

This sequence belongs to the major facilitator superfamily. Spinster (TC 2.A.1.49) family.

Its subcellular location is the cell membrane. The protein resides in the endosome membrane. It catalyses the reaction sphing-4-enine 1-phosphate(in) = sphing-4-enine 1-phosphate(out). The catalysed reaction is sphinganine 1-phosphate(in) = sphinganine 1-phosphate(out). Its function is as follows. Lipid transporter that specifically mediates export of sphingosine-1-phosphate (sphing-4-enine 1-phosphate, S1P) and sphinganine-1-phosphate. This is Sphingosine-1-phosphate transporter SPNS2 (spns2) from Xenopus tropicalis (Western clawed frog).